A 321-amino-acid chain; its full sequence is Beta-porphyranase B (321 aa).

A signal peptide spans 1–20; the sequence is MRKTVLYLSAASLFLSSYTL. One can recognise a GH16 domain in the interval 31–319; the sequence is EHIKNLPEAP…WVRAYKLVPI (289 aa). Substrate-binding residues include W72, R76, E173, E178, and E284. Residue E173 is the Nucleophile of the active site. E178 functions as the Proton donor in the catalytic mechanism.

It belongs to the glycosyl hydrolase 16 family.

The catalysed reaction is Hydrolysis of beta-D-galactopyranose-(1-&gt;4)-alpha-L-galactopyranose-6-sulfate linkages in porphyran.. Its function is as follows. Cleaves the sulfated polysaccharide porphyran at the (1-&gt;4) linkages between beta-D-galactopyranose and alpha-L-galactopyranose-6-sulfate, forming mostly the disaccharide alpha-L-galactopyranose-6-sulfate-(1-&gt;3)-beta-D-galactose. Some longer oligosaccharides of even number of residues are also observed. Inactive on the non-sulfated agarose portion of the porphyran backbone. This Phocaeicola plebeius (strain DSM 17135 / JCM 12973 / CCUG 54634 / M2) (Bacteroides plebeius) protein is Beta-porphyranase B.